A 312-amino-acid chain; its full sequence is Putative olfactory receptor 1F2 (312 aa).

At methionine 1–histidine 25 the chain is on the extracellular side. The chain crosses the membrane as a helical span at residues leucine 26–isoleucine 49. At serine 50–threonine 57 the chain is on the cytoplasmic side. Residues proline 58 to proline 78 form a helical membrane-spanning segment. The Extracellular portion of the chain corresponds to lysine 79–glutamine 99. Cysteine 96 and cysteine 188 are disulfide-bonded. The helical transmembrane segment at methionine 100–tyrosine 119 threads the bilayer. At aspartate 120–glutamine 138 the chain is on the cytoplasmic side. Residues leucine 139–leucine 157 form a helical membrane-spanning segment. Residues histidine 158–glutamate 195 are Extracellular-facing. The helical transmembrane segment at valine 196–methionine 218 threads the bilayer. Residues histidine 219–lysine 235 lie on the Cytoplasmic side of the membrane. The chain crosses the membrane as a helical span at residues alanine 236 to tyrosine 258. The Extracellular portion of the chain corresponds to phenylalanine 259–isoleucine 271. A helical membrane pass occupies residues alanine 272–leucine 291. The Cytoplasmic segment spans residues arginine 292–glutamine 312.

It belongs to the G-protein coupled receptor 1 family.

The protein resides in the cell membrane. In terms of biological role, odorant receptor. This is Putative olfactory receptor 1F2 (OR1F2P) from Homo sapiens (Human).